The chain runs to 85 residues: uncharacterized protein (85 aa).

2 disordered regions span residues 1–28 and 35–54; these read MPQK…LRKA and SKKK…SLTE. Positions 35-48 are enriched in basic residues; the sequence is SKKKSLQHLKKLKK.

Its subcellular location is the nucleus. This is an uncharacterized protein from Saccharomyces cerevisiae (strain ATCC 204508 / S288c) (Baker's yeast).